The chain runs to 480 residues: RNA-splicing ligase RtcB homolog (480 aa).

Positions 93, 96, 202, 234, and 328 each coordinate Mn(2+). 201-205 provides a ligand contact to GMP; the sequence is NHYTE. GMP contacts are provided by residues 328 to 329, 377 to 380, serine 384, 403 to 406, and lysine 479; these read HN, GGTM, and HGAG. Histidine 403 functions as the GMP-histidine intermediate in the catalytic mechanism.

The protein belongs to the RtcB family. As to quaternary structure, catalytic component of the tRNA-splicing ligase complex. Requires Mn(2+) as cofactor.

The catalysed reaction is a 3'-end 3'-phospho-ribonucleotide-RNA + a 5'-end dephospho-ribonucleoside-RNA + GTP = a ribonucleotidyl-ribonucleotide-RNA + GMP + diphosphate. It catalyses the reaction a 3'-end 2',3'-cyclophospho-ribonucleotide-RNA + a 5'-end dephospho-ribonucleoside-RNA + GTP + H2O = a ribonucleotidyl-ribonucleotide-RNA + GMP + diphosphate + H(+). Catalytic subunit of the tRNA-splicing ligase complex that acts by directly joining spliced tRNA halves to mature-sized tRNAs by incorporating the precursor-derived splice junction phosphate into the mature tRNA as a canonical 3',5'-phosphodiester. May act as an RNA ligase with broad substrate specificity, and may function toward other RNAs. This chain is RNA-splicing ligase RtcB homolog, found in Thalassiosira pseudonana (Marine diatom).